A 490-amino-acid polypeptide reads, in one-letter code: ATP synthase subunit beta, chloroplastic (490 aa).

Residue 170 to 177 participates in ATP binding; that stretch reads GGAGVGKT.

It belongs to the ATPase alpha/beta chains family. As to quaternary structure, F-type ATPases have 2 components, CF(1) - the catalytic core - and CF(0) - the membrane proton channel. CF(1) has five subunits: alpha(3), beta(3), gamma(1), delta(1), epsilon(1). CF(0) has four main subunits: a(1), b(1), b'(1) and c(9-12).

The protein resides in the plastid. The protein localises to the chloroplast thylakoid membrane. The catalysed reaction is ATP + H2O + 4 H(+)(in) = ADP + phosphate + 5 H(+)(out). Its function is as follows. Produces ATP from ADP in the presence of a proton gradient across the membrane. The catalytic sites are hosted primarily by the beta subunits. The protein is ATP synthase subunit beta, chloroplastic of Ipomoea setosa (Brazilian morning glory).